Reading from the N-terminus, the 181-residue chain is Inner membrane-spanning protein YciB (181 aa).

5 consecutive transmembrane segments (helical) span residues 10–30 (LIIF…GALI), 50–70 (MHLI…VFHD), 72–92 (AFIK…LGVS), 118–138 (VTWY…YVAF), and 148–168 (FKVF…VFYL).

This sequence belongs to the YciB family.

It localises to the cell inner membrane. Its function is as follows. Plays a role in cell envelope biogenesis, maintenance of cell envelope integrity and membrane homeostasis. The chain is Inner membrane-spanning protein YciB from Shewanella sp. (strain MR-7).